We begin with the raw amino-acid sequence, 607 residues long: Chaperone protein dnaK (607 aa).

Positions lysine 579 to lysine 591 are enriched in polar residues. The segment at lysine 579–glutamate 607 is disordered. Residues alanine 592–glutamate 607 show a composition bias toward basic and acidic residues.

The protein belongs to the heat shock protein 70 family.

It localises to the plastid. Its subcellular location is the chloroplast. Functionally, acts as a chaperone. This Cyanidioschyzon merolae (strain NIES-3377 / 10D) (Unicellular red alga) protein is Chaperone protein dnaK.